A 405-amino-acid polypeptide reads, in one-letter code: L-carnitine CoA-transferase (405 aa).

Positions 97 and 104 each coordinate CoA. Catalysis depends on Asp169, which acts as the Nucleophile.

The protein belongs to the CoA-transferase III family. CaiB subfamily. Homodimer.

The protein localises to the cytoplasm. It catalyses the reaction crotonobetainyl-CoA + (R)-carnitine = crotonobetaine + (R)-carnitinyl-CoA. It carries out the reaction 4-(trimethylamino)butanoyl-CoA + (R)-carnitine = (R)-carnitinyl-CoA + 4-(trimethylamino)butanoate. Its pathway is amine and polyamine metabolism; carnitine metabolism. In terms of biological role, catalyzes the reversible transfer of the CoA moiety from gamma-butyrobetainyl-CoA to L-carnitine to generate L-carnitinyl-CoA and gamma-butyrobetaine. Is also able to catalyze the reversible transfer of the CoA moiety from gamma-butyrobetainyl-CoA or L-carnitinyl-CoA to crotonobetaine to generate crotonobetainyl-CoA. The protein is L-carnitine CoA-transferase of Salmonella enteritidis PT4 (strain P125109).